Consider the following 393-residue polypeptide: Glycerol-3-phosphate dehydrogenase [NAD(+)] 1 (393 aa).

NAD(+)-binding positions include 45–50 (GSGNWG), F133, K157, and A190. Substrate is bound at residue K157. K250 serves as the catalytic Proton acceptor. Residues R316 and Q345 each contribute to the NAD(+) site. 316–317 (RN) lines the substrate pocket.

This sequence belongs to the NAD-dependent glycerol-3-phosphate dehydrogenase family.

The enzyme catalyses sn-glycerol 3-phosphate + NAD(+) = dihydroxyacetone phosphate + NADH + H(+). The sequence is that of Glycerol-3-phosphate dehydrogenase [NAD(+)] 1 (gpd1) from Cyberlindnera jadinii (Torula yeast).